Reading from the N-terminus, the 627-residue chain is Mitochondrial distribution and morphology protein 34 (627 aa).

Positions 1–195 (MAFNFNWSPL…LPAIIHRLSL (195 aa)) constitute an SMP-LTD domain. Disordered regions lie at residues 209–230 (SAQV…NPPQ), 332–470 (ASLA…RTSP), 486–557 (LQRQ…SRPS), and 586–627 (RIQD…AYRH). Composition is skewed to low complexity over residues 215 to 225 (PSLDGPGLDPL) and 332 to 341 (ASLASSSHSR). Residues 360–372 (RHSKAHARKRKKR) show a composition bias toward basic residues. Positions 373–384 (VVDLRRRPKSAD) are enriched in basic and acidic residues. Residues 390 to 412 (SGESAYTETSTTTSAVSVFSGST) show a composition bias toward low complexity. Basic and acidic residues predominate over residues 436–451 (TLRDRIAARDDAERNS). Over residues 528–557 (PNASNNYTSSSSPSARDPQQQQPQQLSRPS) the composition is skewed to low complexity.

The protein belongs to the MDM34 family. In terms of assembly, component of the ER-mitochondria encounter structure (ERMES) or MDM complex, composed of MMM1, MDM10, MDM12 and MDM34.

It is found in the mitochondrion outer membrane. Component of the ERMES/MDM complex, which serves as a molecular tether to connect the endoplasmic reticulum (ER) and mitochondria. Components of this complex are involved in the control of mitochondrial shape and protein biogenesis, and function in nonvesicular lipid trafficking between the ER and mitochondria. MDM34 is required for the interaction of the ER-resident membrane protein MMM1 and the outer mitochondrial membrane-resident beta-barrel protein MDM10. The protein is Mitochondrial distribution and morphology protein 34 of Blastomyces gilchristii (strain SLH14081) (Blastomyces dermatitidis).